The sequence spans 328 residues: Acetaldehyde dehydrogenase 3 (328 aa).

Position 17–20 (17–20 (SGNI)) interacts with NAD(+). Cys135 (acyl-thioester intermediate) is an active-site residue. NAD(+)-binding positions include 166 to 174 (SAGPGTRAN) and Asn298.

Belongs to the acetaldehyde dehydrogenase family.

It catalyses the reaction acetaldehyde + NAD(+) + CoA = acetyl-CoA + NADH + H(+). This is Acetaldehyde dehydrogenase 3 from Nocardia farcinica (strain IFM 10152).